Consider the following 192-residue polypeptide: Xanthine phosphoribosyltransferase (192 aa).

Residues leucine 20 and asparagine 27 each contribute to the xanthine site. 128-132 provides a ligand contact to 5-phospho-alpha-D-ribose 1-diphosphate; it reads ANGDA. A xanthine-binding site is contributed by lysine 156.

This sequence belongs to the purine/pyrimidine phosphoribosyltransferase family. Xpt subfamily. In terms of assembly, homodimer.

It localises to the cytoplasm. The catalysed reaction is XMP + diphosphate = xanthine + 5-phospho-alpha-D-ribose 1-diphosphate. Its pathway is purine metabolism; XMP biosynthesis via salvage pathway; XMP from xanthine: step 1/1. In terms of biological role, converts the preformed base xanthine, a product of nucleic acid breakdown, to xanthosine 5'-monophosphate (XMP), so it can be reused for RNA or DNA synthesis. The polypeptide is Xanthine phosphoribosyltransferase (Staphylococcus aureus (strain bovine RF122 / ET3-1)).